Reading from the N-terminus, the 259-residue chain is 2,3-dihydroxy-2,3-dihydro-p-cumate dehydrogenase (259 aa).

18-42 (VTGGAHGIGLGIVERLLGLGARVTA) provides a ligand contact to NAD(+). Residue Tyr-163 is the Proton acceptor of the active site.

Belongs to the short-chain dehydrogenases/reductases (SDR) family.

The enzyme catalyses (2R,3S)-2,3-dihydroxy-2,3-dihydro-p-cumate + NAD(+) = 2,3-dihydroxy-p-cumate + NADH + H(+). It functions in the pathway aromatic compound metabolism; p-cumate degradation; acetaldehyde and pyruvate from p-cumate: step 2/7. The protein is 2,3-dihydroxy-2,3-dihydro-p-cumate dehydrogenase (cmtB) of Pseudomonas putida (strain ATCC 700007 / DSM 6899 / JCM 31910 / BCRC 17059 / LMG 24140 / F1).